A 124-amino-acid chain; its full sequence is Non-specific lipid-transfer protein (124 aa).

The first 26 residues, 1–26 (MANSGVMKLVCLVLACMVVAAPLAEA), serve as a signal peptide directing secretion. 4 cysteine pairs are disulfide-bonded: Cys30–Cys77, Cys40–Cys54, Cys55–Cys100, and Cys75–Cys114.

Belongs to the plant LTP family.

In terms of biological role, plant non-specific lipid-transfer proteins transfer phospholipids as well as galactolipids across membranes. May play a role in wax or cutin deposition in the cell walls of expanding epidermal cells and certain secretory tissues. The polypeptide is Non-specific lipid-transfer protein (Macadamia integrifolia (Macadamia nut)).